The chain runs to 37 residues: Large ribosomal subunit protein bL36c (37 aa).

It belongs to the bacterial ribosomal protein bL36 family.

Its subcellular location is the plastid. The protein resides in the chloroplast. The polypeptide is Large ribosomal subunit protein bL36c (rpl36) (Nephroselmis olivacea (Green alga)).